The following is a 159-amino-acid chain: Pathogenesis-related leaf protein 4 (159 aa).

An N-terminal signal peptide occupies residues 1 to 24 (MGLFNISLLLTCLMVLAIFHSCEA). Gln-25 carries the pyrrolidone carboxylic acid modification. In terms of domain architecture, SCP spans 32–147 (LAVHNDARAQ…NGWWFISCNY (116 aa)). 3 disulfides stabilise this stretch: Cys-68/Cys-136, Cys-109/Cys-115, and Cys-131/Cys-145.

This sequence belongs to the CRISP family.

Probably involved in the defense reaction of plants against pathogens. This Solanum lycopersicum (Tomato) protein is Pathogenesis-related leaf protein 4.